A 200-amino-acid chain; its full sequence is Small ribosomal subunit protein uS4c (200 aa).

The disordered stretch occupies residues 20-42 (GLTRKTTTRTSRPGQHGTQARKP). Residues 23–37 (RKTTTRTSRPGQHGT) show a composition bias toward polar residues. One can recognise an S4 RNA-binding domain in the interval 90 to 152 (MRLDNVIFRL…PKSQSIVKNY (63 aa)).

The protein belongs to the universal ribosomal protein uS4 family. As to quaternary structure, part of the 30S ribosomal subunit. Contacts protein S5. The interaction surface between S4 and S5 is involved in control of translational fidelity.

The protein resides in the plastid. The protein localises to the chloroplast. Functionally, one of the primary rRNA binding proteins, it binds directly to 16S rRNA where it nucleates assembly of the body of the 30S subunit. In terms of biological role, with S5 and S12 plays an important role in translational accuracy. The protein is Small ribosomal subunit protein uS4c (rps4) of Guillardia theta (Cryptophyte).